The primary structure comprises 608 residues: MSSALAYMLLVLSISLLNGQSPPGKPEIHKCRSPDKETFTCWWNPGSDGGLPTNYSLTYSKEGEKNTYECPDYKTSGPNSCFFSKQYTSIWKIYIITVNATNEMGSSTSDPLYVDVTYIVEPEPPRNLTLEVKQLKDKKTYLWVKWLPPTITDVKTGWFTMEYEIRLKSEEADEWEIHFTGHQTQFKVFDLYPGQKYLVQTRCKPDHGYWSRWGQEKSIEIPNDFTLKDTTVWIIVAVLSAVICLIMVWAVALKGYSMMTCIFPPVPGPKIKGFDTHLLEKGKSEELLSALGCQDFPPTSDCEDLLVEFLEVDDNEDERLMPSHSKEYPGQGVKPTHLDPDSDSGHGSYDSHSLLSEKCEEPQAYPPAFHIPEITEKPENPEANIPPTPNPQNNTPNCHTDTSKSTTWPLPPGQHTRRSPYHSIADVCKLAGSPGDTLDSFLDKAEENVLKLSEDAGEEEVAVQEGAKSFPSDKQNTSWPPLQEKGPIVYAKPPDYVEIHKVNKDGVLSLLPKQRENHQTENPGVPETSKEYAKVSGVTDNNILVLVPDSRAQNTALLEESAKKVPPSLEQNQSEKDLASFTATSSNCRLQLGRLDYLDPTCFMHSFH.

The first 19 residues, 1–19, serve as a signal peptide directing secretion; it reads MSSALAYMLLVLSISLLNG. The Extracellular portion of the chain corresponds to 20–229; the sequence is QSPPGKPEIH…EIPNDFTLKD (210 aa). Fibronectin type-III domains follow at residues 22-122 and 124-224; these read PPGK…IVEP and PPRN…IPND. An intrachain disulfide couples Cys-31 to Cys-41. Residue Asn-54 is glycosylated (N-linked (GlcNAc...) asparagine). Residues Cys-70 and Cys-81 are joined by a disulfide bond. Asn-99 and Asn-127 each carry an N-linked (GlcNAc...) asparagine glycan. Zn(2+) is bound by residues Asp-206 and His-207. The short motif at 210–214 is the WSXWS motif element; that stretch reads WSRWG. A helical transmembrane segment spans residues 230–253; that stretch reads TTVWIIVAVLSAVICLIMVWAVAL. The Cytoplasmic segment spans residues 254-608; it reads KGYSMMTCIF…DPTCFMHSFH (355 aa). Positions 262–270 match the Box 1 motif motif; that stretch reads IFPPVPGPK. Disordered regions lie at residues 317–355, 377–419, and 466–487; these read DERL…HSLL, KPEN…TRRS, and GAKS…EKGP. Residues 318 to 327 show a composition bias toward basic and acidic residues; sequence ERLMPSHSKE. The segment covering 345–354 has biased composition (low complexity); sequence GHGSYDSHSL. Polar residues predominate over residues 398-408; the sequence is CHTDTSKSTTW.

This sequence belongs to the type I cytokine receptor family. Type 1 subfamily. Interacts with SMARCA1. Interacts with NEK3 and VAV2 and this interaction is prolactin-dependent.

It is found in the membrane. Functionally, this is a receptor for the anterior pituitary hormone prolactin. In Mus musculus (Mouse), this protein is Prolactin receptor (Prlr).